The sequence spans 366 residues: Aminomethyltransferase (366 aa).

The protein belongs to the GcvT family. The glycine cleavage system is composed of four proteins: P, T, L and H.

The enzyme catalyses N(6)-[(R)-S(8)-aminomethyldihydrolipoyl]-L-lysyl-[protein] + (6S)-5,6,7,8-tetrahydrofolate = N(6)-[(R)-dihydrolipoyl]-L-lysyl-[protein] + (6R)-5,10-methylene-5,6,7,8-tetrahydrofolate + NH4(+). In terms of biological role, the glycine cleavage system catalyzes the degradation of glycine. In Bacillus cereus (strain B4264), this protein is Aminomethyltransferase.